A 365-amino-acid polypeptide reads, in one-letter code: MERLLQPSSSSSSISPSKFPSRTSPFLPRLRSSGLSFVSTHRPESRRVSSISCNSSQIPSLYTPIGSNTTNNSFNGSPKSDESKPNPGFLTRIATSASEQRKTLSTGTVILISAVAVLLLNPLLAPPAFASFQTAAKSGWLTSAWTGFLAGCLHTLSGPDHLAALAPLSIGRSKMESAAVGALWGCGHDAGQVIFGLLFLLLKDRLHIEVLQTWGTRIVGLTLVIIGAMGIKEASEIPEPCVALETDISMVSTEKEALPLPKKKKIGFATFATGVVHGLQPDALMIVLPALALPSRLAGSAFLIMFLVGTVIAMGSYTAFIGSCSEALKEKVPRITEKLTWVSSLVAIGLGLGIVISPFFGFSLY.

2 disordered regions span residues 1–30 and 62–90; these read MERL…LPRL and YTPI…PGFL. The N-terminal 79 residues, 1–79, are a transit peptide targeting the chloroplast; that stretch reads MERLLQPSSS…TNNSFNGSPK (79 aa). Low complexity-rich tracts occupy residues 7–24 and 62–77; these read PSSS…SRTS and YTPI…FNGS. 7 helical membrane-spanning segments follow: residues 109-129, 139-159, 182-202, 218-238, 274-294, 301-321, and 345-365; these read VILI…PPAF, GWLT…LSGP, ALWG…FLLL, IVGL…SEIP, GVVH…LALP, AFLI…TAFI, and LVAI…FSLY.

In terms of tissue distribution, mostly expressed in leaves and flowers, to a lower extent, in stems, roots, floral bud, inflorescence and siliques, and, barely, in seedlings.

It localises to the plastid. The protein localises to the chloroplast membrane. The protein resides in the plastid membrane. In terms of biological role, together with CGF2, essential protein which supports female gametogenesis and embryogenesis, probably by securing local energy supply. This is Chloroplast protein FOR GROWTH AND FERTILITY 1 from Arabidopsis thaliana (Mouse-ear cress).